Consider the following 171-residue polypeptide: Translation initiation factor IF-3 (171 aa).

This sequence belongs to the IF-3 family. As to quaternary structure, monomer.

The protein resides in the cytoplasm. In terms of biological role, IF-3 binds to the 30S ribosomal subunit and shifts the equilibrium between 70S ribosomes and their 50S and 30S subunits in favor of the free subunits, thus enhancing the availability of 30S subunits on which protein synthesis initiation begins. This chain is Translation initiation factor IF-3, found in Listeria innocua serovar 6a (strain ATCC BAA-680 / CLIP 11262).